Here is a 172-residue protein sequence, read N- to C-terminus: MNRPNRINEEIRVKEVRLIDQNGEQAGIVSIQQALEMMAEQAELDLVEISPNAEPPVCRIMNYGKFLYEKSKTAKEQKKKQKVVQVKEIKFRPGTDEGDYQVKLRSLIRFLEDGDKAKITVRFRGREMAHQDIGLDVLERVKNDLAEISVVESAPGKLEGRQAVMVLAPKKK.

Belongs to the IF-3 family. As to quaternary structure, monomer.

The protein resides in the cytoplasm. IF-3 binds to the 30S ribosomal subunit and shifts the equilibrium between 70S ribosomes and their 50S and 30S subunits in favor of the free subunits, thus enhancing the availability of 30S subunits on which protein synthesis initiation begins. This is Translation initiation factor IF-3 from Haemophilus influenzae (strain ATCC 51907 / DSM 11121 / KW20 / Rd).